The primary structure comprises 518 residues: Arrestin-related trafficking adapter 10 (518 aa).

Lys-118 participates in a covalent cross-link: Glycyl lysine isopeptide (Lys-Gly) (interchain with G-Cter in ubiquitin).

The protein belongs to the ART10 family. Interacts with RSP5. In terms of processing, ubiquitinated by RSP5.

It is found in the cytoplasm. In terms of biological role, may regulate endocytosis by recruiting RSP5 ubiquitin ligase activity to specific plasma membrane proteins in response to extracellular stimuli. The chain is Arrestin-related trafficking adapter 10 (ART10) from Saccharomyces cerevisiae (strain YJM789) (Baker's yeast).